The primary structure comprises 1207 residues: DNA-directed RNA polymerase subunit beta' (1207 aa).

Zn(2+)-binding residues include C60, C62, C75, and C78. Mg(2+)-binding residues include D450, D452, and D454. Zn(2+)-binding residues include C818, C892, C899, and C902.

The protein belongs to the RNA polymerase beta' chain family. The RNAP catalytic core consists of 2 alpha, 1 beta, 1 beta' and 1 omega subunit. When a sigma factor is associated with the core the holoenzyme is formed, which can initiate transcription. It depends on Mg(2+) as a cofactor. Zn(2+) serves as cofactor.

The enzyme catalyses RNA(n) + a ribonucleoside 5'-triphosphate = RNA(n+1) + diphosphate. In terms of biological role, DNA-dependent RNA polymerase catalyzes the transcription of DNA into RNA using the four ribonucleoside triphosphates as substrates. In Lactococcus lactis subsp. cremoris (strain MG1363), this protein is DNA-directed RNA polymerase subunit beta'.